Here is a 151-residue protein sequence, read N- to C-terminus: Ribosome maturation factor RimP (151 aa).

This sequence belongs to the RimP family.

It localises to the cytoplasm. Functionally, required for maturation of 30S ribosomal subunits. This Colwellia psychrerythraea (strain 34H / ATCC BAA-681) (Vibrio psychroerythus) protein is Ribosome maturation factor RimP.